A 622-amino-acid polypeptide reads, in one-letter code: Chaperone protein HscA homolog (622 aa).

This sequence belongs to the heat shock protein 70 family.

Chaperone involved in the maturation of iron-sulfur cluster-containing proteins. Has a low intrinsic ATPase activity which is markedly stimulated by HscB. This Verminephrobacter eiseniae (strain EF01-2) protein is Chaperone protein HscA homolog.